The chain runs to 416 residues: 4-hydroxy-3-methylbut-2-en-1-yl diphosphate synthase (flavodoxin) (416 aa).

4 residues coordinate [4Fe-4S] cluster: Cys304, Cys307, Cys350, and Glu357.

This sequence belongs to the IspG family. [4Fe-4S] cluster serves as cofactor.

It catalyses the reaction (2E)-4-hydroxy-3-methylbut-2-enyl diphosphate + oxidized [flavodoxin] + H2O + 2 H(+) = 2-C-methyl-D-erythritol 2,4-cyclic diphosphate + reduced [flavodoxin]. Its pathway is isoprenoid biosynthesis; isopentenyl diphosphate biosynthesis via DXP pathway; isopentenyl diphosphate from 1-deoxy-D-xylulose 5-phosphate: step 5/6. In terms of biological role, converts 2C-methyl-D-erythritol 2,4-cyclodiphosphate (ME-2,4cPP) into 1-hydroxy-2-methyl-2-(E)-butenyl 4-diphosphate. In Rhizobium etli (strain CIAT 652), this protein is 4-hydroxy-3-methylbut-2-en-1-yl diphosphate synthase (flavodoxin).